The following is a 363-amino-acid chain: MDSAVDGPRQPPARAGSRLCTRCGERKAALKRPKTLEQICRECFYVVFEDEIHQTIVDNNLFKPGDRVAIGASGGKDSTVLAYVLSELNRRHKYCLDLFLLSVDEGITGYRDDSLETVKRNEIQYGLPLKIVSYKDLYGWTMDDIVKAIGLKNNCTFCGVFRRQALDRGAALLKVDKIVTGHNADDIAETVLLNILRGDIARLSRCTFITTGEDGPIPRCKPFKYTYEKEIVMYAYFKKLDYFSTECIYSPNAYRGFAREFIKDLERMRPRAILDIIKSGENFRISTTTRMPEQGTCERCGYISSQKLCKACVLLDGLNRGLPKLGIGRTKGIAGGDGDCEQQATRSERNRSSLQGKHGNFDF.

The interval Asp337 to Phe363 is disordered.

This sequence belongs to the TtcA family. CTU1/NCS6/ATPBD3 subfamily.

The protein resides in the cytoplasm. The protein operates within tRNA modification; 5-methoxycarbonylmethyl-2-thiouridine-tRNA biosynthesis. Its function is as follows. Plays a central role in 2-thiolation of mcm(5)S(2)U at tRNA wobble positions of tRNA(Lys), tRNA(Glu) and tRNA(Gln). Directly binds tRNAs and probably acts by catalyzing adenylation of tRNAs, an intermediate required for 2-thiolation. It is unclear whether it acts as a sulfurtransferase that transfers sulfur from thiocarboxylated URM1 onto the uridine of tRNAs at wobble position. The chain is Cytoplasmic tRNA 2-thiolation protein 1 from Oryza sativa subsp. japonica (Rice).